A 404-amino-acid chain; its full sequence is UPF0674 endoplasmic reticulum membrane protein YNR021W (404 aa).

Residue S2 is modified to N-acetylserine. An N-linked (GlcNAc...) asparagine glycan is attached at N44. Residues 49–68 (LCALGVLFLVYAFYKFGNSV) traverse the membrane as a helical segment. A glycan (N-linked (GlcNAc...) asparagine) is linked at N98. The segment at 369–404 (AKRRQLKASGQQEKVDQKMKEKRERRLKNKQRTRFQ) is disordered. Over residues 381–392 (EKVDQKMKEKRE) the composition is skewed to basic and acidic residues. A compositionally biased stretch (basic residues) spans 393–404 (RRLKNKQRTRFQ).

This sequence belongs to the UPF0674 family.

Its subcellular location is the endoplasmic reticulum membrane. This chain is UPF0674 endoplasmic reticulum membrane protein YNR021W, found in Saccharomyces cerevisiae (strain ATCC 204508 / S288c) (Baker's yeast).